A 293-amino-acid chain; its full sequence is tRNA-cytidine(32) 2-sulfurtransferase (293 aa).

Positions 71–76 match the PP-loop motif motif; it reads SGGKDS. [4Fe-4S] cluster is bound by residues Cys-146, Cys-149, and Cys-237.

The protein belongs to the TtcA family. Homodimer. Requires Mg(2+) as cofactor. [4Fe-4S] cluster serves as cofactor.

It localises to the cytoplasm. It carries out the reaction cytidine(32) in tRNA + S-sulfanyl-L-cysteinyl-[cysteine desulfurase] + AH2 + ATP = 2-thiocytidine(32) in tRNA + L-cysteinyl-[cysteine desulfurase] + A + AMP + diphosphate + H(+). It participates in tRNA modification. Functionally, catalyzes the ATP-dependent 2-thiolation of cytidine in position 32 of tRNA, to form 2-thiocytidine (s(2)C32). The sulfur atoms are provided by the cysteine/cysteine desulfurase (IscS) system. This Sinorhizobium medicae (strain WSM419) (Ensifer medicae) protein is tRNA-cytidine(32) 2-sulfurtransferase.